Consider the following 442-residue polypeptide: MKKFFQEIKADIKFKSAGPGQKLTDSAGEKTTKGKSPQLALRQPRQGPTDEAQMAAAAALARLEQKQPRARGPTSQDSIRNQVRKELQAEATSSNNPGAPGTNSVPEPKEEISPHLAVPGVFFICPLTGVTLRRDQRDAHIKQAILSHFSTDPVAASIMKIHTFNRDRDRVKLGVDTIAKYLDNIHLHPEEEKYQKIKLQNKVFQERINCLEGSHEFFEAIGFKKVTLPVPDQEGQEEFYVLGEDARAQPQNLARHKQQLLDAEPVRATLDRQLRVFRPSALASHFELPSDFFSLTAEEVKREQRLRTEAVERLSSLRTKAMREKEEQRELRKYTYALVRVRLPDGCLLQGTFYAREKLSALFRFVREALQNDWLPFELRASGGQKLEENEALALNECGLVPSALLTFSWDASVLEDIRAAGAEPAKSVLRPELLAAIEQLS.

A mediates interaction with LMAN1 region spans residues 1-10 (MKKFFQEIKA). The segment at 13-111 (KFKSAGPGQK…TNSVPEPKEE (99 aa)) is disordered. Phosphoserine is present on Ser-36. A VCP/p97-interacting motif (VIM) region spans residues 51 to 63 (EAQMAAAAALARL). A compositionally biased stretch (low complexity) spans 52-61 (AQMAAAAALA). A compositionally biased stretch (polar residues) spans 90 to 105 (EATSSNNPGAPGTNSV). A PUB domain is found at 175 to 244 (VDTIAKYLDN…GQEEFYVLGE (70 aa)). Residues 332 to 408 (RKYTYALVRV…GLVPSALLTF (77 aa)) enclose the UBX domain.

In terms of assembly, interacts with VCP through the PUB domain (via C-terminus) and VIM motif (via N-terminus); the interaction is direct. Forms a ternary complex with CAV1 and VCP. Interacts with SYVN1. Interacts with HERPUD1. Interacts with VCPKMT. May interact with DERL1. Interacts with PLAA, VCP and YOD1; may form a complex involved in macroautophagy. Interacts with LMAN1. Widely expressed (at protein level). Highest expression in brain (at protein level).

The protein localises to the cytoplasm. It is found in the cytosol. It localises to the membrane. The protein resides in the nucleus. Its subcellular location is the cytoskeleton. The protein localises to the microtubule organizing center. It is found in the centrosome. It localises to the early endosome membrane. The protein resides in the late endosome membrane. Its subcellular location is the lysosome membrane. Its function is as follows. May negatively regulate the ATPase activity of VCP, an ATP-driven segregase that associates with different cofactors to control a wide variety of cellular processes. As a cofactor of VCP, it may play a role in the transport of CAV1 to lysosomes for degradation. It may also play a role in endoplasmic reticulum-associated degradation (ERAD) of misfolded proteins. Together with VCP and other cofactors, it may play a role in macroautophagy, regulating for instance the clearance of damaged lysosomes. The chain is UBX domain-containing protein 6 from Mus musculus (Mouse).